We begin with the raw amino-acid sequence, 730 residues long: MERLVATRLVTGLAVKIMRSNGVIHNANITSVNMDRSSVNVEWKEGEANKGKEISFADVISVNPELLDAVLAPTNVKENMPPQRNVSSQNHKRKTISKIPAPKEVAAKNSLLSESGAQSVLRERSTRMTAIHETLPYENEMEAESTPLPIQQNSVQARSRSTKVSIAEEPRLQTRISEIVEESLPSGRNNQGRRKSNIVKEMEKMKNKREEQRAQNYERRMKRAQDYDTSVPNWEFGKMIKEFRATMDCHRISMADPAEEHRICVCVRKRPLNKQELSKKEIDIISVPSKNIVLVHEPKLKVDLTKYLENQAFRFDFSFDETATNEVVYRFTARPLVQSIFEGGKATCFAYGQTGSGKTHTMGGDFSGKSQNVSKGVYAFASRDVFLLLDQPRYKHLDLDVFVTFFEIYNGKVFDLLNKKTKLRVLEDAKQEVQVVGLLEKQVISADDVFKMIEIGSACRTSGQTFANTSSSRSHACLQIILRRGSKLHGKFSLVDLAGNERGVDTASADRITRMEGAEINRSLLALKECIRALGQNKSHTPFRESKLTQILRDSFIGENSRTCMIAMLSPGFNSCEYTLNTLRYADRVKELSPQNAETNDDNLQMEDSGGSHASIEGLQLQDDFLLKDEELSTHNSFQDALNRVGELEDKAVDELRELVQKEPEWTNLLQMTEQPDYDLENFVMQAEYLIQERSKVLIALGDSINSLRLALQVEEQASKQISKKKRSNK.

The globular stretch occupies residues 1–256 (MERLVATRLV…MDCHRISMAD (256 aa)). A disordered region spans residues 79–98 (NMPPQRNVSSQNHKRKTISK). Residues 211–242 (EQRAQNYERRMKRAQDYDTSVPNWEFGKMIKE) are negative regulator of microtubule-binding. Residues 262 to 592 (RICVCVRKRP…LRYADRVKEL (331 aa)) enclose the Kinesin motor domain. Residues arginine 268 and 352–359 (GQTGSGKT) each bind ATP. A coiled-coil region spans residues 599–730 (TNDDNLQMED…QISKKKRSNK (132 aa)).

Belongs to the TRAFAC class myosin-kinesin ATPase superfamily. Kinesin family. MCAK/KIF2 subfamily.

It is found in the cytoplasm. The protein localises to the cytoskeleton. It localises to the nucleus. The protein resides in the chromosome. Its subcellular location is the centromere. It is found in the kinetochore. Its function is as follows. Promotes ATP-dependent removal of tubulin dimers from microtubules. Regulates the turnover of microtubules at the kinetochore and functions in chromosome segregation during mitosis. May play a role in chromosome congression and may be required for the lateral to end-on conversion of the chromosome-microtubule attachment. The chain is Kinesin-like protein KIF2C (kif2c) from Xenopus laevis (African clawed frog).